Here is a 417-residue protein sequence, read N- to C-terminus: uncharacterized protein (417 aa).

Residues 10–30 (ALVCFSILSILVLACGCVNTP) traverse the membrane as a helical segment. Residues 84 to 106 (QENHPLQSNQNYEQTNGNFNEEN) are disordered. Residues 86 to 106 (NHPLQSNQNYEQTNGNFNEEN) are compositionally biased toward polar residues. Residues 148-168 (LYYIKVIDPIVGGLAGIDIYV) form a helical membrane-spanning segment.

It localises to the cell membrane. This is an uncharacterized protein from Methanocaldococcus jannaschii (strain ATCC 43067 / DSM 2661 / JAL-1 / JCM 10045 / NBRC 100440) (Methanococcus jannaschii).